The following is a 552-amino-acid chain: Cation/acetate symporter ActP (552 aa).

Transmembrane regions (helical) follow at residues 6–26, 35–55, 78–98, 103–123, 151–171, 185–205, 208–228, 264–284, 305–325, 357–377, 407–427, 431–451, 467–487, and 496–516; these read LLAVLALLLSGPVVAADAIAG, MEAIVMFLIFVAMTLGITYWA, GLAMAGDFMSAASFLGISALV, FDGLIYSLGFLVGWPIILFLI, LSACGSLVVVALYLIAQMVGA, VAVVLVGILMVMYVLFGGMLA, WVQIIKAVLLLFGASFMAIMV, ISALSLGLGLMFGTAGLPHIL, GLMGYFYFLTFIIGFGAILLV, LFLGFISAVAFATILAVVAGL, VSKITVVALGVVAILLGILFE, IAFMVGLAFSIAASCNFPIIL, GGWLGLLTAVILMILGPTIWV, and IFPYEYPALFSMLVAFIGTWL.

This sequence belongs to the sodium:solute symporter (SSF) (TC 2.A.21) family.

Its subcellular location is the cell inner membrane. Its function is as follows. Transports acetate. This Erwinia tasmaniensis (strain DSM 17950 / CFBP 7177 / CIP 109463 / NCPPB 4357 / Et1/99) protein is Cation/acetate symporter ActP.